The sequence spans 262 residues: Acyl-[acyl-carrier-protein]--UDP-N-acetylglucosamine O-acyltransferase (262 aa).

This sequence belongs to the transferase hexapeptide repeat family. LpxA subfamily. In terms of assembly, homotrimer.

The protein localises to the cytoplasm. The enzyme catalyses a (3R)-hydroxyacyl-[ACP] + UDP-N-acetyl-alpha-D-glucosamine = a UDP-3-O-[(3R)-3-hydroxyacyl]-N-acetyl-alpha-D-glucosamine + holo-[ACP]. It participates in glycolipid biosynthesis; lipid IV(A) biosynthesis; lipid IV(A) from (3R)-3-hydroxytetradecanoyl-[acyl-carrier-protein] and UDP-N-acetyl-alpha-D-glucosamine: step 1/6. Involved in the biosynthesis of lipid A, a phosphorylated glycolipid that anchors the lipopolysaccharide to the outer membrane of the cell. The protein is Acyl-[acyl-carrier-protein]--UDP-N-acetylglucosamine O-acyltransferase of Burkholderia orbicola (strain MC0-3).